Consider the following 136-residue polypeptide: Small ribosomal subunit protein eS6 (136 aa).

The protein belongs to the eukaryotic ribosomal protein eS6 family.

This Methanosarcina mazei (strain ATCC BAA-159 / DSM 3647 / Goe1 / Go1 / JCM 11833 / OCM 88) (Methanosarcina frisia) protein is Small ribosomal subunit protein eS6.